A 319-amino-acid polypeptide reads, in one-letter code: MSLNFLDFEQPIAELEAKIDSLTAVSRQDEKLDINIDEEVHRLREKSVELTRKIFADLGAWQIAQLARHPQRPYTLDYVRLAFDEFDELAGDRAYADDKAIVGGIARLDGRPVMIIGHQKGRETKEKIRRNFGMPAPEGYRKALRLMQMAERFKMPIITFIDTPGAYPGVGAEERGQSEAIARNLREMSRLSVPTICTVIGEGGSGGALAIGVGDKVNMLQYSTYSVISPEGCASILWKSADKAPLAAEAMGIIAPRLKELKLIDSIIPEPLGGAHRNPEAMAASLKAQLLADLADLDVLSTEDLKNRRYQRLMSYGYA.

The region spanning 35–296 is the CoA carboxyltransferase C-terminal domain; that stretch reads NIDEEVHRLR…KAQLLADLAD (262 aa).

This sequence belongs to the AccA family. In terms of assembly, acetyl-CoA carboxylase is a heterohexamer composed of biotin carboxyl carrier protein (AccB), biotin carboxylase (AccC) and two subunits each of ACCase subunit alpha (AccA) and ACCase subunit beta (AccD).

It is found in the cytoplasm. The catalysed reaction is N(6)-carboxybiotinyl-L-lysyl-[protein] + acetyl-CoA = N(6)-biotinyl-L-lysyl-[protein] + malonyl-CoA. The protein operates within lipid metabolism; malonyl-CoA biosynthesis; malonyl-CoA from acetyl-CoA: step 1/1. In terms of biological role, component of the acetyl coenzyme A carboxylase (ACC) complex. First, biotin carboxylase catalyzes the carboxylation of biotin on its carrier protein (BCCP) and then the CO(2) group is transferred by the carboxyltransferase to acetyl-CoA to form malonyl-CoA. The sequence is that of Acetyl-coenzyme A carboxylase carboxyl transferase subunit alpha from Escherichia coli O127:H6 (strain E2348/69 / EPEC).